Reading from the N-terminus, the 885-residue chain is Protein transport protein SEC24-1 (885 aa).

Cys164, Cys167, Cys186, and Cys189 together coordinate Zn(2+). Residues 164–189 form a zinc finger-like region; it reads CRRCRSYLNPFVAFIEQGRRWQCNIC. Residues 296 to 332 are disordered; that stretch reads DDYEESDDDDDEDDDDEEEDNEEEEEEEEDEEDDDDS.

Belongs to the SEC23/SEC24 family. SEC24 subfamily. As to quaternary structure, the COPII coat is composed of at least 5 proteins: the SEC23/24 complex, the SEC13/31 complex, and the protein SAR1. Golgi apparatus membrane; Peripheral membrane protein; Cytoplasmic side.

Its subcellular location is the cytoplasm. The protein resides in the cytoplasmic vesicle. It is found in the COPII-coated vesicle membrane. It localises to the endoplasmic reticulum membrane. The protein localises to the golgi apparatus membrane. Functionally, component of the coat protein complex II (COPII) which promotes the formation of transport vesicles from the endoplasmic reticulum (ER). The coat has two main functions, the physical deformation of the endoplasmic reticulum membrane into vesicles and the selection of cargo molecules. The chain is Protein transport protein SEC24-1 (SEC241) from Saccharomyces uvarum (strain ATCC 76518 / CBS 7001 / CLIB 283 / NBRC 10550 / MCYC 623 / NCYC 2669 / NRRL Y-11845) (Yeast).